A 128-amino-acid chain; its full sequence is UPF0292 protein MJ1624 (128 aa).

In terms of domain architecture, Toprim spans 23–105 (EKPIIVEGKR…KVNTKIRHEI (83 aa)). Mg(2+) contacts are provided by E29, D74, and D76.

Belongs to the UPF0292 family. Mg(2+) serves as cofactor.

This chain is UPF0292 protein MJ1624, found in Methanocaldococcus jannaschii (strain ATCC 43067 / DSM 2661 / JAL-1 / JCM 10045 / NBRC 100440) (Methanococcus jannaschii).